The sequence spans 118 residues: Down syndrome critical region protein 4 (118 aa).

Residues M1–S39 are disordered. Positions S28–S39 are enriched in low complexity.

In terms of tissue distribution, mainly expressed in placenta.

The protein is Down syndrome critical region protein 4 (DSCR4) of Homo sapiens (Human).